The sequence spans 349 residues: MVEKEEVSGGGGGISEEEAAQYDRQIRLWGLEAQKRLRASRVLIVGMKGLGAEIAKNLILAGVKGLTMLDHEQVSPEDLGAQFLIRTGSVGQNRAEASLERAQNLNPMVDVKVDTEDIEKKPESFFTEFDAVCLTCCSKDVIIKVDQICHRNSIKFFTGDVFGYHGYTFANLGEHEFVEEKTKVTKVSQGVEDGPDAKRAKLDSSETTMVKKKVLFCPVKEALAVDWSGEKAQAALKRTAPDYFLLQVLLKFRTDKGRDPTSDSYSEDAELLLQIRNDVFDSLGVSPDLLPDDFVRYCFSEMAPVCAVVGGILAQEIVKALSQRDPPHNNFFFFDGMKGSGIVECLGPQ.

Position 1 is an N-acetylmethionine (Met1). Val2 is modified (N-acetylvaline; in SUMO-activating enzyme subunit 1, N-terminally processed). The residue at position 15 (Ser15) is a Phosphoserine. Lys201 is subject to N6-acetyllysine.

Belongs to the ubiquitin-activating E1 family. As to quaternary structure, heterodimer of SAE1 and UBA2/SAE2. The heterodimer corresponds to the two domains that are encoded on a single polypeptide chain in ubiquitin-activating enzyme E1. Interacts with UBE2I.

The protein resides in the nucleus. It participates in protein modification; protein sumoylation. Its function is as follows. The heterodimer acts as an E1 ligase for SUMO1, SUMO2, SUMO3, and probably SUMO4. It mediates ATP-dependent activation of SUMO proteins followed by formation of a thioester bond between a SUMO protein and a conserved active site cysteine residue on UBA2/SAE2. This is SUMO-activating enzyme subunit 1 (Sae1) from Rattus norvegicus (Rat).